Reading from the N-terminus, the 314-residue chain is Carbamate kinase (314 aa).

Belongs to the carbamate kinase family. As to quaternary structure, homodimer.

The protein resides in the cytoplasm. It carries out the reaction hydrogencarbonate + NH4(+) + ATP = carbamoyl phosphate + ADP + H2O + H(+). In Pyrococcus horikoshii (strain ATCC 700860 / DSM 12428 / JCM 9974 / NBRC 100139 / OT-3), this protein is Carbamate kinase (cpkA).